The following is a 131-amino-acid chain: MFRTLLKSKIHRAVVTHCELHYEGSCGIDEDLLDAANLCENEQIHVWNINNGERFVTYVIKAPRGSGIISLNGSAARRASAGDLVIIAAFAQVHEEQVPTHQPKLVFMDEANRIKELRSEPQNPPQTSPLR.

The Schiff-base intermediate with substrate; via pyruvic acid role is filled by Ser-25. At Ser-25 the chain carries Pyruvic acid (Ser). Position 57 (Thr-57) interacts with substrate. The active-site Proton donor is Tyr-58. A substrate-binding site is contributed by 73 to 75; the sequence is GSA.

This sequence belongs to the PanD family. Heterooctamer of four alpha and four beta subunits. The cofactor is pyruvate. Is synthesized initially as an inactive proenzyme, which is activated by self-cleavage at a specific serine bond to produce a beta-subunit with a hydroxyl group at its C-terminus and an alpha-subunit with a pyruvoyl group at its N-terminus.

The protein localises to the cytoplasm. The enzyme catalyses L-aspartate + H(+) = beta-alanine + CO2. The protein operates within cofactor biosynthesis; (R)-pantothenate biosynthesis; beta-alanine from L-aspartate: step 1/1. In terms of biological role, catalyzes the pyruvoyl-dependent decarboxylation of aspartate to produce beta-alanine. The protein is Aspartate 1-decarboxylase of Leptothrix cholodnii (strain ATCC 51168 / LMG 8142 / SP-6) (Leptothrix discophora (strain SP-6)).